The following is an 803-amino-acid chain: Bromodomain-containing protein 2 (803 aa).

Position 1 is an N-acetylmethionine (Met1). Positions 1-28 are disordered; sequence MLQNVTPHSKLPGEGNAGLLGLGPEAAA. A Phosphothreonine modification is found at Thr6. Ser37 carries the phosphoserine modification. Positions 53 to 73 are disordered; that stretch reads ALQLTPANPPPPEVSNPKKPG. A Bromo 1 domain is found at 74 to 180; that stretch reads RVTNQLQYLH…KIFLQKVASM (107 aa). Residues Asp112, Tyr155, Asn156, Lys157, Asp160, and Asp161 each coordinate a protein. 3 disordered regions span residues 268 to 349, 456 to 653, and 739 to 803; these read PPAQ…LSEQ, EPLE…RQLS, and EKRL…SDSG. Residues 285–298 are compositionally biased toward low complexity; the sequence is TTTPTPTAILAPGS. Phosphoserine is present on residues Ser298, Ser301, and Ser305. Residues 316 to 332 show a composition bias toward basic and acidic residues; the sequence is MRRESGRPIKPPRKDLP. Positions 344-453 constitute a Bromo 2 domain; that stretch reads GKLSEQLKHC…DVFEFRYAKM (110 aa). Acidic residues predominate over residues 481–515; sequence SSEESSSESSSEEDEEEDEEEEEEEEESESSDSEE. Positions 545-567 are enriched in basic residues; the sequence is KPKRKREKKEKKKKRKAEKHRGR. The short motif at 556–560 is the Nuclear localization signal element; the sequence is KKKRK. The NET domain maps to 634-716; the sequence is DSEEEEESRP…SCLRKKPRKP (83 aa). Ser635 carries the post-translational modification Phosphoserine. Basic and acidic residues predominate over residues 641 to 652; that stretch reads SRPMSYDEKRQL. Positions 777 to 797 are enriched in low complexity; it reads SASSSSSDSSSSSSSSSSSDT.

The protein belongs to the BET family. In terms of assembly, homodimer. Interacts with E2F1. Interacts with (acetylated) STAT3; promoting STAT3 recruitment to chromatin. Interacts with CTCF; promoting BRD2 recruitment to chromatin.

It localises to the nucleus. The protein resides in the chromosome. In terms of biological role, chromatin reader protein that specifically recognizes and binds histone H4 acetylated at 'Lys-5' and 'Lys-12' (H4K5ac and H4K12ac, respectively), thereby controlling gene expression and remodeling chromatin structures. Recruits transcription factors and coactivators to target gene sites, and activates RNA polymerase II machinery for transcriptional elongation. Plays a key role in genome compartmentalization via its association with CTCF and cohesin: recruited to chromatin by CTCF and promotes formation of topologically associating domains (TADs) via its ability to bind acetylated histones, contributing to CTCF boundary formation and enhancer insulation. Also recognizes and binds acetylated non-histone proteins, such as STAT3. Involved in inflammatory response by regulating differentiation of naive CD4(+) T-cells into T-helper Th17: recognizes and binds STAT3 acetylated at 'Lys-87', promoting STAT3 recruitment to chromatin. In addition to acetylated lysines, also recognizes and binds lysine residues on histones that are both methylated and acetylated on the same side chain to form N6-acetyl-N6-methyllysine (Kacme), an epigenetic mark of active chromatin associated with increased transcriptional initiation. Specifically binds histone H4 acetyl-methylated at 'Lys-5' and 'Lys-12' (H4K5acme and H4K12acme, respectively). This chain is Bromodomain-containing protein 2 (BRD2), found in Canis lupus familiaris (Dog).